The following is a 446-amino-acid chain: Phosphoglucosamine mutase (446 aa).

The active-site Phosphoserine intermediate is Ser-99. Ser-99, Asp-242, Asp-244, and Asp-246 together coordinate Mg(2+). The residue at position 99 (Ser-99) is a Phosphoserine.

It belongs to the phosphohexose mutase family. Mg(2+) serves as cofactor. Post-translationally, activated by phosphorylation.

It carries out the reaction alpha-D-glucosamine 1-phosphate = D-glucosamine 6-phosphate. Functionally, catalyzes the conversion of glucosamine-6-phosphate to glucosamine-1-phosphate. This Campylobacter fetus subsp. fetus (strain 82-40) protein is Phosphoglucosamine mutase.